The following is a 489-amino-acid chain: Putative ATP-dependent RNA helicase T26G10.1 (489 aa).

Residues 44 to 72 (KSFAELGVSQPLCDACQRLGWMKPSKIQQ) carry the Q motif motif. A Helicase ATP-binding domain is found at 75 to 246 (LPHALQGKDV…RASLRDPARV (172 aa)). Residue 88–95 (AETGSGKT) participates in ATP binding. A DEAD box motif is present at residues 194-197 (DEAD). Residues 257 to 417 (NLKQHYIFVP…EYKCVENEVM (161 aa)) form the Helicase C-terminal domain. Positions 433 to 489 (EMKEMDEKKKSGKKRRQNDDFGDTEESGGRFKMGIKSMGGRGGSGGGRGGKKKKMSK) are disordered. Positions 469–480 (SMGGRGGSGGGR) are enriched in gly residues.

The protein belongs to the DEAD box helicase family. DDX47/RRP3 subfamily.

The protein resides in the nucleus. The catalysed reaction is ATP + H2O = ADP + phosphate + H(+). In terms of biological role, probable ATP-dependent RNA helicase which may be involved in ribosome biogenesis. The chain is Putative ATP-dependent RNA helicase T26G10.1 from Caenorhabditis elegans.